The primary structure comprises 363 residues: Aminomethyltransferase (363 aa).

The protein belongs to the GcvT family. The glycine cleavage system is composed of four proteins: P, T, L and H.

The catalysed reaction is N(6)-[(R)-S(8)-aminomethyldihydrolipoyl]-L-lysyl-[protein] + (6S)-5,6,7,8-tetrahydrofolate = N(6)-[(R)-dihydrolipoyl]-L-lysyl-[protein] + (6R)-5,10-methylene-5,6,7,8-tetrahydrofolate + NH4(+). In terms of biological role, the glycine cleavage system catalyzes the degradation of glycine. This Thioalkalivibrio sulfidiphilus (strain HL-EbGR7) protein is Aminomethyltransferase.